The following is a 505-amino-acid chain: MGSCCSSQDGDGNGKATAGSTVDSHELSQSVKGKIKQPEPKPKPPPQVPPAQDVKYPIYVGKYDYDSRTDDDLSFKKGDLMYIISTDEGDWWFARSKDTAGKEGYIPSNYVAEYKSLDAEEWFLGKIKRVEAEKMLNQSFNQVGSFLIRDSETTPGDFSLSVKDQDRVRHYRVRRLEDGSLFVTRRSTFQILHELVDHYKIETDGLCCKLLYPCLQAEKPQTAGLLRQANEEWEIEKTQIKLLRRLGAGQFGEVWEGLWNGTTSVAVKTLKPGTMSVEEFLQEASIMKRLRHPKLIQLYAVCTKEEPIYIVTELMKYGSLLEYLRGEDGVLKIEQLVDVAAQVASGMSYLEQQNYIHRDLAARNILVGEHGICKVADFGLARVIDEEIYEAHTGAKFPIKWTAPEAAMYNRFTIKSDVWSFGVVLYEIITYGRFPYPGMTNPEVLEKIQQNYRMPCPANCPKQFHDIMLDCWREDPASRPTFETLQWQLEEFFNSEGYRDPDAIH.

Polar residues-rich tracts occupy residues 1 to 10 (MGSCCSSQDG) and 18 to 31 (AGSTVDSHELSQSV). The disordered stretch occupies residues 1 to 53 (MGSCCSSQDGDGNGKATAGSTVDSHELSQSVKGKIKQPEPKPKPPPQVPPAQD). The region spanning 54-116 (VKYPIYVGKY…PSNYVAEYKS (63 aa)) is the SH3 domain. Residues 122-214 (WFLGKIKRVE…GLCCKLLYPC (93 aa)) form the SH2 domain. A Protein kinase domain is found at 240–493 (IKLLRRLGAG…TLQWQLEEFF (254 aa)). ATP contacts are provided by residues 246 to 254 (LGAGQFGEV) and lysine 268. Aspartate 359 functions as the Proton acceptor in the catalytic mechanism.

It belongs to the protein kinase superfamily. Tyr protein kinase family. SRC subfamily.

The protein resides in the cytoplasm. The catalysed reaction is L-tyrosyl-[protein] + ATP = O-phospho-L-tyrosyl-[protein] + ADP + H(+). This chain is Tyrosine-protein kinase isoform SRK1 (SRK1), found in Spongilla lacustris (Freshwater sponge).